We begin with the raw amino-acid sequence, 429 residues long: Phosphomethylpyrimidine synthase (429 aa).

Substrate-binding positions include N66, M95, Y124, H163, 185–187, 226–229, and E265; these read SRG and DAMR. Residue H269 coordinates Zn(2+). Y292 is a binding site for substrate. H333 is a binding site for Zn(2+). [4Fe-4S] cluster is bound by residues C409, C412, and C416.

Belongs to the ThiC family. [4Fe-4S] cluster serves as cofactor.

It carries out the reaction 5-amino-1-(5-phospho-beta-D-ribosyl)imidazole + S-adenosyl-L-methionine = 4-amino-2-methyl-5-(phosphooxymethyl)pyrimidine + CO + 5'-deoxyadenosine + formate + L-methionine + 3 H(+). It functions in the pathway cofactor biosynthesis; thiamine diphosphate biosynthesis. Catalyzes the synthesis of the hydroxymethylpyrimidine phosphate (HMP-P) moiety of thiamine from aminoimidazole ribotide (AIR) in a radical S-adenosyl-L-methionine (SAM)-dependent reaction. In Methanopyrus kandleri (strain AV19 / DSM 6324 / JCM 9639 / NBRC 100938), this protein is Phosphomethylpyrimidine synthase.